Consider the following 91-residue polypeptide: Putative membrane protein insertion efficiency factor (91 aa).

Residues Gly66–Ala91 form a disordered region. Over residues His77–Ala91 the composition is skewed to basic and acidic residues.

Belongs to the UPF0161 family.

The protein resides in the cell inner membrane. Functionally, could be involved in insertion of integral membrane proteins into the membrane. This is Putative membrane protein insertion efficiency factor from Hydrogenovibrio crunogenus (strain DSM 25203 / XCL-2) (Thiomicrospira crunogena).